The sequence spans 868 residues: MALTPMMQQYLDIKKQHPNTILFFRLGDFYEMFFEDAKLASQELEITLTGRDAGEPERVPMCGVPFHAADSYISKLIEKGYKVAICEQVEDPKVTKGIVKREVIRVITPGTLMDGSMLSEKDNNYLVAISQTSSNNCGMAVADLSTGLFQVTEMEGHWSLESLLDEILRLTPREVLLTPDLKKHEKTVQAFNFLPSTVFTTLEETQQVSDYIELLNNQFGQKVSAVYKDRPAVCMAAGILLQYLINTQKRQLNHITEITAYSPRAYMMLDGIARRNLEISKSLRDGDKRGTLLWVLDATKTAMGGRMLKNWLEQPLIDTLKIQERLDAVEELVNSILLREEISGALKQIYDLERLAARAAYGSANGRDMIALRGSLEKLPFIHDALAAVSSTRLKRIYTEFNTLSDLRKVLDLALAENPPVSLRDGGLIKDGFDQEVDQLRNAARDGKTWLAGLEAREKENTGIKNLKVGFNKVFGYYLEVTRANLSMVPEYYQRRQTLANAERFITPELKEYESMILGAEDRLVELEYNLFVAIRAKVAAEVSSIQKTAALLSEIDALVSLAEVAVRNGFVRPEVTDNGIIEIKDGRHPVVENTQGLGGFVPNDTYLDIKEERLCLITGPNMGGKSTYQRQVALIVLMAQVGSFVPAQRARIGIVDRIFARVGASDDLTSGQSTFMVEMYETKQIIDHATAKSLVIIDELGRGTSNLEGMAIAQSVIEFLHDEVGCRTLFSTHYHELAELEGLLRGLKNYATAVKEQGDEVVFLRKVVRSKASKSYGVHCARLAGLPTSIIRRASELVMQLEFHQRAAQEVVAGKTQIAAASEQLAMFTPQEDQVKEEILALNLTNMTPLESLNFLDNLQKRLREMQ.

620-627 (GPNMGGKS) lines the ATP pocket.

It belongs to the DNA mismatch repair MutS family.

This protein is involved in the repair of mismatches in DNA. It is possible that it carries out the mismatch recognition step. This protein has a weak ATPase activity. The chain is DNA mismatch repair protein MutS from Desulforamulus reducens (strain ATCC BAA-1160 / DSM 100696 / MI-1) (Desulfotomaculum reducens).